Here is a 554-residue protein sequence, read N- to C-terminus: Dihydroxy-acid dehydratase (554 aa).

Asp-78 is a Mg(2+) binding site. Residue Cys-119 participates in [2Fe-2S] cluster binding. Asp-120 and Lys-121 together coordinate Mg(2+). N6-carboxylysine is present on Lys-121. Cys-191 contributes to the [2Fe-2S] cluster binding site. Residue Glu-442 coordinates Mg(2+). The active-site Proton acceptor is Ser-468.

Belongs to the IlvD/Edd family. As to quaternary structure, homodimer. Requires [2Fe-2S] cluster as cofactor. The cofactor is Mg(2+).

The enzyme catalyses (2R)-2,3-dihydroxy-3-methylbutanoate = 3-methyl-2-oxobutanoate + H2O. It catalyses the reaction (2R,3R)-2,3-dihydroxy-3-methylpentanoate = (S)-3-methyl-2-oxopentanoate + H2O. It participates in amino-acid biosynthesis; L-isoleucine biosynthesis; L-isoleucine from 2-oxobutanoate: step 3/4. The protein operates within amino-acid biosynthesis; L-valine biosynthesis; L-valine from pyruvate: step 3/4. Its function is as follows. Functions in the biosynthesis of branched-chain amino acids. Catalyzes the dehydration of (2R,3R)-2,3-dihydroxy-3-methylpentanoate (2,3-dihydroxy-3-methylvalerate) into 2-oxo-3-methylpentanoate (2-oxo-3-methylvalerate) and of (2R)-2,3-dihydroxy-3-methylbutanoate (2,3-dihydroxyisovalerate) into 2-oxo-3-methylbutanoate (2-oxoisovalerate), the penultimate precursor to L-isoleucine and L-valine, respectively. This is Dihydroxy-acid dehydratase from Acetivibrio thermocellus (strain ATCC 27405 / DSM 1237 / JCM 9322 / NBRC 103400 / NCIMB 10682 / NRRL B-4536 / VPI 7372) (Clostridium thermocellum).